Reading from the N-terminus, the 438-residue chain is Histidine--tRNA ligase (438 aa).

It belongs to the class-II aminoacyl-tRNA synthetase family. In terms of assembly, homodimer.

Its subcellular location is the cytoplasm. It carries out the reaction tRNA(His) + L-histidine + ATP = L-histidyl-tRNA(His) + AMP + diphosphate + H(+). The sequence is that of Histidine--tRNA ligase from Aromatoleum aromaticum (strain DSM 19018 / LMG 30748 / EbN1) (Azoarcus sp. (strain EbN1)).